Reading from the N-terminus, the 95-residue chain is Large ribosomal subunit protein uL23 (95 aa).

Belongs to the universal ribosomal protein uL23 family. As to quaternary structure, part of the 50S ribosomal subunit. Contacts protein L29, and trigger factor when it is bound to the ribosome.

One of the early assembly proteins it binds 23S rRNA. One of the proteins that surrounds the polypeptide exit tunnel on the outside of the ribosome. Forms the main docking site for trigger factor binding to the ribosome. The chain is Large ribosomal subunit protein uL23 from Thermodesulfovibrio yellowstonii (strain ATCC 51303 / DSM 11347 / YP87).